Here is a 488-residue protein sequence, read N- to C-terminus: Catalase (488 aa).

Residues 1–24 are disordered; sequence MTERKNLTTNQGTPVGDNQNSMTA. Residues 7–23 are compositionally biased toward polar residues; the sequence is LTTNQGTPVGDNQNSMT. Catalysis depends on residues histidine 55 and asparagine 128. Tyrosine 338 serves as a coordination point for heme.

The protein belongs to the catalase family. Requires heme as cofactor.

It localises to the cytoplasm. It carries out the reaction 2 H2O2 = O2 + 2 H2O. Its function is as follows. Decomposes hydrogen peroxide into water and oxygen; serves to protect cells from the toxic effects of hydrogen peroxide. This Listeria innocua serovar 6a (strain ATCC BAA-680 / CLIP 11262) protein is Catalase (kat).